Reading from the N-terminus, the 675-residue chain is DNA gyrase subunit B (675 aa).

In terms of domain architecture, Toprim spans 453-567 (SELYVVEGDS…NGHVFLAQPP (115 aa)). Residues Glu459, Asp532, and Asp534 each contribute to the Mg(2+) site.

It belongs to the type II topoisomerase GyrB family. As to quaternary structure, heterotetramer, composed of two GyrA and two GyrB chains. In the heterotetramer, GyrA contains the active site tyrosine that forms a transient covalent intermediate with DNA, while GyrB binds cofactors and catalyzes ATP hydrolysis. The cofactor is Mg(2+). Mn(2+) is required as a cofactor. It depends on Ca(2+) as a cofactor.

Its subcellular location is the cytoplasm. It catalyses the reaction ATP-dependent breakage, passage and rejoining of double-stranded DNA.. Its function is as follows. A type II topoisomerase that negatively supercoils closed circular double-stranded (ds) DNA in an ATP-dependent manner to modulate DNA topology and maintain chromosomes in an underwound state. Negative supercoiling favors strand separation, and DNA replication, transcription, recombination and repair, all of which involve strand separation. Also able to catalyze the interconversion of other topological isomers of dsDNA rings, including catenanes and knotted rings. Type II topoisomerases break and join 2 DNA strands simultaneously in an ATP-dependent manner. In Mycobacterium tuberculosis (strain ATCC 25177 / H37Ra), this protein is DNA gyrase subunit B.